Reading from the N-terminus, the 82-residue chain is ATP synthase subunit c (82 aa).

Helical transmembrane passes span 18-38 and 61-81; these read LGEA…IGKI and IIAA…CGFL.

This sequence belongs to the ATPase C chain family. As to quaternary structure, F-type ATPases have 2 components, F(1) - the catalytic core - and F(0) - the membrane proton channel. F(1) has five subunits: alpha(3), beta(3), gamma(1), delta(1), epsilon(1). F(0) has three main subunits: a(1), b(2) and c(10-14). The alpha and beta chains form an alternating ring which encloses part of the gamma chain. F(1) is attached to F(0) by a central stalk formed by the gamma and epsilon chains, while a peripheral stalk is formed by the delta and b chains.

It localises to the cell inner membrane. Its function is as follows. F(1)F(0) ATP synthase produces ATP from ADP in the presence of a proton or sodium gradient. F-type ATPases consist of two structural domains, F(1) containing the extramembraneous catalytic core and F(0) containing the membrane proton channel, linked together by a central stalk and a peripheral stalk. During catalysis, ATP synthesis in the catalytic domain of F(1) is coupled via a rotary mechanism of the central stalk subunits to proton translocation. Functionally, key component of the F(0) channel; it plays a direct role in translocation across the membrane. A homomeric c-ring of between 10-14 subunits forms the central stalk rotor element with the F(1) delta and epsilon subunits. The polypeptide is ATP synthase subunit c (Azobacteroides pseudotrichonymphae genomovar. CFP2).